Consider the following 161-residue polypeptide: 2-C-methyl-D-erythritol 2,4-cyclodiphosphate synthase (161 aa).

Residues D10 and H12 each contribute to the a divalent metal cation site. Residues 10 to 12 and 36 to 37 contribute to the 4-CDP-2-C-methyl-D-erythritol 2-phosphate site; these read DVH and HS. Position 44 (H44) interacts with a divalent metal cation. Residues 58–60, 63–67, and R144 contribute to the 4-CDP-2-C-methyl-D-erythritol 2-phosphate site; these read DIG and FSDTD.

It belongs to the IspF family. Homotrimer. A divalent metal cation is required as a cofactor.

It carries out the reaction 4-CDP-2-C-methyl-D-erythritol 2-phosphate = 2-C-methyl-D-erythritol 2,4-cyclic diphosphate + CMP. It participates in isoprenoid biosynthesis; isopentenyl diphosphate biosynthesis via DXP pathway; isopentenyl diphosphate from 1-deoxy-D-xylulose 5-phosphate: step 4/6. Involved in the biosynthesis of isopentenyl diphosphate (IPP) and dimethylallyl diphosphate (DMAPP), two major building blocks of isoprenoid compounds. Catalyzes the conversion of 4-diphosphocytidyl-2-C-methyl-D-erythritol 2-phosphate (CDP-ME2P) to 2-C-methyl-D-erythritol 2,4-cyclodiphosphate (ME-CPP) with a corresponding release of cytidine 5-monophosphate (CMP). The sequence is that of 2-C-methyl-D-erythritol 2,4-cyclodiphosphate synthase from Burkholderia cenocepacia (strain HI2424).